Here is a 115-residue protein sequence, read N- to C-terminus: Large ribosomal subunit protein bL19 (115 aa).

Belongs to the bacterial ribosomal protein bL19 family.

In terms of biological role, this protein is located at the 30S-50S ribosomal subunit interface and may play a role in the structure and function of the aminoacyl-tRNA binding site. In Citrobacter koseri (strain ATCC BAA-895 / CDC 4225-83 / SGSC4696), this protein is Large ribosomal subunit protein bL19.